The primary structure comprises 501 residues: Aspartyl/glutamyl-tRNA(Asn/Gln) amidotransferase subunit B (501 aa).

The tract at residues 276–299 is disordered; it reads HYQEADGSTSKGRPKETAEDYRYF. Over residues 288-299 the composition is skewed to basic and acidic residues; that stretch reads RPKETAEDYRYF.

The protein belongs to the GatB/GatE family. GatB subfamily. In terms of assembly, heterotrimer of A, B and C subunits.

It catalyses the reaction L-glutamyl-tRNA(Gln) + L-glutamine + ATP + H2O = L-glutaminyl-tRNA(Gln) + L-glutamate + ADP + phosphate + H(+). The enzyme catalyses L-aspartyl-tRNA(Asn) + L-glutamine + ATP + H2O = L-asparaginyl-tRNA(Asn) + L-glutamate + ADP + phosphate + 2 H(+). Its function is as follows. Allows the formation of correctly charged Asn-tRNA(Asn) or Gln-tRNA(Gln) through the transamidation of misacylated Asp-tRNA(Asn) or Glu-tRNA(Gln) in organisms which lack either or both of asparaginyl-tRNA or glutaminyl-tRNA synthetases. The reaction takes place in the presence of glutamine and ATP through an activated phospho-Asp-tRNA(Asn) or phospho-Glu-tRNA(Gln). This Corynebacterium glutamicum (strain R) protein is Aspartyl/glutamyl-tRNA(Asn/Gln) amidotransferase subunit B.